Consider the following 524-residue polypeptide: Probable glycine dehydrogenase (decarboxylating) subunit 2 (524 aa).

Lysine 296 bears the N6-(pyridoxal phosphate)lysine mark.

The protein belongs to the GcvP family. C-terminal subunit subfamily. In terms of assembly, the glycine cleavage system is composed of four proteins: P, T, L and H. In this organism, the P 'protein' is a heterodimer of two subunits. It depends on pyridoxal 5'-phosphate as a cofactor.

It carries out the reaction N(6)-[(R)-lipoyl]-L-lysyl-[glycine-cleavage complex H protein] + glycine + H(+) = N(6)-[(R)-S(8)-aminomethyldihydrolipoyl]-L-lysyl-[glycine-cleavage complex H protein] + CO2. The glycine cleavage system catalyzes the degradation of glycine. The P protein binds the alpha-amino group of glycine through its pyridoxal phosphate cofactor; CO(2) is released and the remaining methylamine moiety is then transferred to the lipoamide cofactor of the H protein. In Caulobacter vibrioides (strain ATCC 19089 / CIP 103742 / CB 15) (Caulobacter crescentus), this protein is Probable glycine dehydrogenase (decarboxylating) subunit 2.